Consider the following 492-residue polypeptide: Regulatory protein ViaA (492 aa).

Belongs to the ViaA family. As to quaternary structure, homodimer. Interacts with RavA.

It localises to the cytoplasm. Functionally, component of the RavA-ViaA chaperone complex, which may act on the membrane to optimize the function of some of the respiratory chains. ViaA stimulates the ATPase activity of RavA. This chain is Regulatory protein ViaA, found in Pectobacterium atrosepticum (strain SCRI 1043 / ATCC BAA-672) (Erwinia carotovora subsp. atroseptica).